Consider the following 359-residue polypeptide: Guanine nucleotide-binding protein G(q) subunit alpha (359 aa).

2 S-palmitoyl cysteine lipidation sites follow: Cys9 and Cys10. Residues 38-359 (RELKLLLLGT…QLNLKEYNLV (322 aa)) form the G-alpha domain. The segment at 41-54 (KLLLLGTGESGKST) is G1 motif. Positions 50, 51, 52, 53, 54, 156, 180, 181, and 183 each coordinate GTP. Ser53 contacts Mg(2+). The interval 178–186 (DVLRVRVPT) is G2 motif. Thr186 is a binding site for Mg(2+). Residues 201–210 (FRMVDVGGQR) form a G3 motif region. Residue Gln209 is modified to 5-glutamyl histamine. Residues 270–277 (ILFLNKKD) form a G4 motif region. 4 residues coordinate GTP: Asn274, Lys275, Asp277, and Ala331. Residues 329–334 (TCATDT) form a G5 motif region.

Belongs to the G-alpha family. G(q) subfamily. In terms of assembly, g proteins are composed of 3 units; alpha, beta and gamma. The alpha chain contains the guanine nucleotide binding site. Interacts (GDP-bound form) with RIC8A (via C-terminus); promoting GNAQ folding and association with the plasma membrane. Binds NHERF1. Forms a complex with PECAM1 and BDKRB2. Interacts with GAS2L2. Palmitoylated by ZDHHC3 and ZDHHC7. Palmitoylation occurs in the Golgi and participates in the localization of GNAQ to the plasma membrane. In terms of processing, histaminylated at Gln-209 residues by TGM2.

It is found in the cell membrane. The protein resides in the golgi apparatus. Its subcellular location is the nucleus. It localises to the nucleus membrane. It catalyses the reaction GTP + H2O = GDP + phosphate + H(+). Guanine nucleotide-binding proteins (G proteins) function as transducers downstream of G protein-coupled receptors (GPCRs) in numerous signaling cascades. The alpha chain contains the guanine nucleotide binding site and alternates between an active, GTP-bound state and an inactive, GDP-bound state. Signaling by an activated GPCR promotes GDP release and GTP binding. The alpha subunit has a low GTPase activity that converts bound GTP to GDP, thereby terminating the signal. Both GDP release and GTP hydrolysis are modulated by numerous regulatory proteins. Signaling is mediated via phospholipase C-beta-dependent inositol lipid hydrolysis for signal propagation: activates phospholipase C-beta: following GPCR activation, GNAQ activates PLC-beta (PLCB1, PLCB2, PLCB3 or PLCB4), leading to production of diacylglycerol (DAG) and inositol 1,4,5-trisphosphate (IP3). Required for platelet activation. Regulates B-cell selection and survival and is required to prevent B-cell-dependent autoimmunity. Regulates chemotaxis of BM-derived neutrophils and dendritic cells (in vitro). Transduces FFAR4 signaling in response to long-chain fatty acids (LCFAs). Together with GNA11, required for heart development. The polypeptide is Guanine nucleotide-binding protein G(q) subunit alpha (Gnaq) (Mus musculus (Mouse)).